We begin with the raw amino-acid sequence, 105 residues long: U2-lycotoxin-Ls1b (105 aa).

Residues methionine 1–serine 17 form the signal peptide. The propeptide occupies phenylalanine 18 to arginine 41. Intrachain disulfides connect cysteine 51–cysteine 67, cysteine 58–cysteine 97, cysteine 60–cysteine 83, and cysteine 69–cysteine 81.

The protein belongs to the neurotoxin 04 (omega-agtx) family. 01 (type I omega-agtx) subfamily. In terms of tissue distribution, expressed by the venom gland.

It is found in the secreted. Insecticidal to house crickets. It induces an excitatory slow-onset impact that leads to irreversible spastic paralysis. It also modifies human voltage-gated potassium channel Kv1.5/KCNA5. Most likely, it binds to the voltage-sensing domain of the channel, suggesting it does not block the pore but prevents its opening at physiological membrane potentials. The recombinant peptide binds to the channel in an irreversible manner and slows down the hKv1.5 current activation kinetics. It is not toxic to mice, when intracranially injected (at 0.5 ug/g mouse). The protein is U2-lycotoxin-Ls1b of Lycosa singoriensis (Wolf spider).